We begin with the raw amino-acid sequence, 140 residues long: Large ribosomal subunit protein bL17 (140 aa).

Belongs to the bacterial ribosomal protein bL17 family. In terms of assembly, part of the 50S ribosomal subunit. Contacts protein L32.

The protein is Large ribosomal subunit protein bL17 of Rhizobium johnstonii (strain DSM 114642 / LMG 32736 / 3841) (Rhizobium leguminosarum bv. viciae).